Consider the following 103-residue polypeptide: uncharacterized protein (103 aa).

The disordered stretch occupies residues 1–103 (MAGARRRARC…WRGGSCTSQR (103 aa)). Composition is skewed to basic residues over residues 55–65 (RRPGPGRRARS) and 74–84 (RPPHSRTRARR).

Belongs to the epstein-barr virus RPMS1 family.

This is an uncharacterized protein from Epstein-Barr virus (strain GD1) (HHV-4).